A 278-amino-acid chain; its full sequence is MAVSQTFPPGPAHEPASALMEPCARSLAEGFLEEELRLNAELSQLQFPEPVGVIYNPVDYAWEPHRNYVTRYCQGPKEVLFLGMNPGPFGMAQTGVPFGEVNVVRDWLGIGGSVLSPPQEHPKRPVLGLECPQSEVSGARFWGFFRTLCGQPQVFFRHCFVHNLCPLLFLAPSGRNLTPADLPAKHREQLLSICDAALCRQVQLLGVRLVVGVGRLAEQRARRALAGLTPEVQVEGLLHPSPRSPQANKGWETAARERLQELGLLPLLTDEGSVRPTP.

The substrate site is built by Met-84, Phe-98, and Asn-163. The DNA-binding stretch occupies residues 173 to 187 (SGRNLTPADLPAKHR). A substrate-binding site is contributed by His-239.

The protein belongs to the uracil-DNA glycosylase (UDG) superfamily. SMUG1 family.

Its subcellular location is the nucleus. Its function is as follows. Recognizes base lesions in the genome and initiates base excision DNA repair. Acts as a monofunctional DNA glycosylase specific for uracil (U) residues in DNA with a preference for single-stranded DNA substrates. The activity is greater toward mismatches (U/G) compared to matches (U/A). Excises uracil (U), 5-formyluracil (fU) and uracil derivatives bearing an oxidized group at C5 [5-hydroxyuracil (hoU) and 5-hydroxymethyluracil (hmU)] in ssDNA and dsDNA, but not analogous cytosine derivatives (5-hydroxycytosine and 5-formylcytosine), nor other oxidized bases. The activity is damage-specific and salt-dependent. The substrate preference is the following: ssDNA &gt; dsDNA (G pair) = dsDNA (A pair) at low salt concentration, and dsDNA (G pair) &gt; dsDNA (A pair) &gt; ssDNA at high salt concentration. In Rattus norvegicus (Rat), this protein is Single-strand selective monofunctional uracil-DNA glycosylase (Smug1).